Reading from the N-terminus, the 81-residue chain is ATP synthase subunit c (81 aa).

The next 2 membrane-spanning stretches (helical) occupy residues A7–G27 and L57–A77.

The protein belongs to the ATPase C chain family. As to quaternary structure, F-type ATPases have 2 components, F(1) - the catalytic core - and F(0) - the membrane proton channel. F(1) has five subunits: alpha(3), beta(3), gamma(1), delta(1), epsilon(1). F(0) has four main subunits: a(1), b(1), b'(1) and c(10-14). The alpha and beta chains form an alternating ring which encloses part of the gamma chain. F(1) is attached to F(0) by a central stalk formed by the gamma and epsilon chains, while a peripheral stalk is formed by the delta, b and b' chains.

It localises to the cellular thylakoid membrane. F(1)F(0) ATP synthase produces ATP from ADP in the presence of a proton or sodium gradient. F-type ATPases consist of two structural domains, F(1) containing the extramembraneous catalytic core and F(0) containing the membrane proton channel, linked together by a central stalk and a peripheral stalk. During catalysis, ATP synthesis in the catalytic domain of F(1) is coupled via a rotary mechanism of the central stalk subunits to proton translocation. In terms of biological role, key component of the F(0) channel; it plays a direct role in translocation across the membrane. A homomeric c-ring of between 10-14 subunits forms the central stalk rotor element with the F(1) delta and epsilon subunits. The polypeptide is ATP synthase subunit c (Synechococcus sp. (strain CC9902)).